The chain runs to 478 residues: UDP-glycosyltransferase 90A1 (478 aa).

UDP-alpha-D-glucose-binding positions include Thr289, 343–345 (VDQ), 360–368 (HCGWNSAQE), and 382–385 (MAEQ).

The protein belongs to the UDP-glycosyltransferase family.

The protein is UDP-glycosyltransferase 90A1 (UGT90A1) of Arabidopsis thaliana (Mouse-ear cress).